The chain runs to 90 residues: DNA-binding protein HU (90 aa).

Belongs to the bacterial histone-like protein family. As to quaternary structure, homodimer.

In terms of biological role, histone-like DNA-binding protein which is capable of wrapping DNA to stabilize it, and thus to prevent its denaturation under extreme environmental conditions. The chain is DNA-binding protein HU (hup) from Haemophilus influenzae (strain ATCC 51907 / DSM 11121 / KW20 / Rd).